A 372-amino-acid chain; its full sequence is MIVKNLVLENYRNHTNTRILFSDRFNIFYGDNGQGKTNILEAIYLCASGRSHRTSRDSELIKFGCENFSIAVHVSKTGGLDKDIEISYYENQKKQIKINDIPIKKIGALMGNLYAVLFSPEDLFIVKQGPTERRRFVDITLSQIKPSYFYNLQQMSKILKQRNTLLKNISSNPKLMDTVDIWNMRLAEVAAAIIKARRTFSIMLSGMAENQHNFLTGKSEKISFDYRCSFQISGQDDTEQIEKLYLVQLEKSMQRDIVLGYTTVGPHRDDYDIMINDKSLKLYGSQGQQRSAVLSLKIAEIELVKKATNQYPVLLLDDVMSELDKNRQKYLMDSIKEVQTFITCTNKEHFGNLLSANSNFFKIVGGNIHSCM.

An ATP-binding site is contributed by 30–37 (GDNGQGKT).

The protein belongs to the RecF family.

It is found in the cytoplasm. Functionally, the RecF protein is involved in DNA metabolism; it is required for DNA replication and normal SOS inducibility. RecF binds preferentially to single-stranded, linear DNA. It also seems to bind ATP. This is DNA replication and repair protein RecF from Ruminiclostridium cellulolyticum (strain ATCC 35319 / DSM 5812 / JCM 6584 / H10) (Clostridium cellulolyticum).